The chain runs to 198 residues: MICOS complex subunit MIC26 (198 aa).

The first 25 residues, 1–25, serve as a signal peptide directing secretion; that stretch reads MFKVIQRSVGPASLSLLTFKVYAAP. Residues 108–128 traverse the membrane as a helical segment; sequence PGFFPRLGVIGFAGLIGLLLA. O-linked (Xyl...) (chondroitin sulfate) serine glycosylation occurs at serine 162.

It belongs to the apolipoprotein O/MICOS complex subunit Mic27 family. In terms of assembly, component of the mitochondrial contact site and cristae organizing system (MICOS) complex, composed of at least MICOS10/MIC10, CHCHD3/MIC19, CHCHD6/MIC25, APOOL/MIC27, IMMT/MIC60, APOO/MIC23/MIC26 and MICOS13/MIC13. This complex was also known under the names MINOS or MitOS complex. he MICOS complex associates with mitochondrial outer membrane proteins SAMM50, MTX1 and MTX2 (together described as components of the mitochondrial outer membrane sorting assembly machinery (SAM) complex) and DNAJC11, mitochondrial inner membrane protein TMEM11 and with HSPA9. The MICOS and SAM complexes together with DNAJC11 are part of a large protein complex spanning both membranes termed the mitochondrial intermembrane space bridging (MIB) complex. Interacts with IMMT/MIC60. Interacts with MICOS10/MIC10 and APOOL/MIC27. Post-translationally, O-glycosylation; glycosaminoglycan of chondroitin-sulfate type. Expressed in all tissues examined. Up-regulated in diabetic heart.

It is found in the mitochondrion inner membrane. It localises to the secreted. Its subcellular location is the mitochondrion. The protein localises to the golgi apparatus membrane. The protein resides in the endoplasmic reticulum membrane. In terms of biological role, component of the MICOS complex, a large protein complex of the mitochondrial inner membrane that plays crucial roles in the maintenance of crista junctions, inner membrane architecture, and formation of contact sites to the outer membrane. Plays a crucial role in crista junction formation and mitochondrial function. Can promote cardiac lipotoxicity by enhancing mitochondrial respiration and fatty acid metabolism in cardiac myoblasts. Promotes cholesterol efflux from macrophage cells. Detected in HDL, LDL and VLDL. Secreted by a microsomal triglyceride transfer protein (MTTP)-dependent mechanism, probably as a VLDL-associated protein that is subsequently transferred to HDL. The polypeptide is MICOS complex subunit MIC26 (APOO) (Homo sapiens (Human)).